We begin with the raw amino-acid sequence, 354 residues long: Hyaluronan and proteoglycan link protein 1 (354 aa).

Positions M1–L9 are excised as a propeptide. An Ig-like V-type domain is found at P38–V152. The N-linked (GlcNAc...) asparagine glycan is linked to N56. Cystine bridges form between C61–C139, C181–C252, C205–C226, C279–C349, and C304–C325. 2 consecutive Link domains span residues V159 to T254 and G259 to R351.

It belongs to the HAPLN family.

It localises to the secreted. Its subcellular location is the extracellular space. The protein localises to the extracellular matrix. Functionally, stabilizes the aggregates of proteoglycan monomers with hyaluronic acid in the extracellular cartilage matrix. The protein is Hyaluronan and proteoglycan link protein 1 (Hapln1) of Rattus norvegicus (Rat).